Here is a 191-residue protein sequence, read N- to C-terminus: Guanylate kinase (191 aa).

Residues 4 to 182 (GRLIVVSGPS…AREEMIEIMR (179 aa)) enclose the Guanylate kinase-like domain. 11 to 18 (GPSGAGKS) is a binding site for ATP.

This sequence belongs to the guanylate kinase family.

The protein resides in the cytoplasm. It catalyses the reaction GMP + ATP = GDP + ADP. Essential for recycling GMP and indirectly, cGMP. This Rubrobacter xylanophilus (strain DSM 9941 / JCM 11954 / NBRC 16129 / PRD-1) protein is Guanylate kinase.